A 250-amino-acid chain; its full sequence is mRNA-decapping protein g5R (250 aa).

Residues 97–243 (QKFRKNWLLP…IIGPAFNFIK (147 aa)) form the Nudix hydrolase domain. The Nudix box signature appears at 132–153 (GKPKEDESDLTCAIREFEEETG). Mg(2+) is bound at residue Glu-138. The active-site Nucleophile is Glu-147. Residues Glu-151 and Asp-173 each contribute to the Mg(2+) site.

Belongs to the Nudix hydrolase family. DIPP subfamily. In terms of assembly, interacts with host RPL23A. Mg(2+) is required as a cofactor. The cofactor is Mn(2+).

It is found in the host rough endoplasmic reticulum. It carries out the reaction diphospho-myo-inositol polyphosphate + H2O = myo-inositol polyphosphate + phosphate.. Its function is as follows. Decapping enzyme required for the removal of the 5'-end m7GpppN cap tethered to viral and host mRNAs to allow their decay in cells. May therefore accelerate viral and cellular mRNA turnover to eliminate competing host mRNAs and allow stage-specific synthesis of viral proteins. Acceleration of the turnover of cellular transcripts may even promote the shutoff of host protein synthesis. In addition to the mRNA cap, g5R also efficiently hydrolyzes diphosphoinositol polyphosphates. Down-regulation of the level of PP-InsP5 (diphosphoinositol pentakisphosphate) may play a role in viral manipulation of the cellular secretory pathway, a step necessary for the formation of virions. Binds viral and cellular poly(A) mRNAs, thereby decreasing both types of mRNAs. In African swine fever virus (isolate Tick/South Africa/Pretoriuskop Pr4/1996) (ASFV), this protein is mRNA-decapping protein g5R.